Reading from the N-terminus, the 312-residue chain is Olfactory receptor OR51C1 (312 aa).

Residues 1 to 26 (MGSNITSTSIIFLLTGVPGLEAFHTW) are Extracellular-facing. A helical membrane pass occupies residues 27-47 (ISIPFCFLSVTALLGNSLILF). Residues 48–66 (ATITQPSLHEPMYYFLSML) lie on the Cytoplasmic side of the membrane. The helical transmembrane segment at 67 to 87 (SATDLGLSISTLVTMLSIFWF) threads the bilayer. Topologically, residues 88–99 (NVREISFNACLS) are extracellular. An intrachain disulfide couples cysteine 97 to cysteine 179. A helical membrane pass occupies residues 100–120 (HMFFIKFFTVMESSVLLAMAF). Over 121-143 (DRFVAVSNPLRYAMILTDSRIAQ) the chain is Cytoplasmic. A helical membrane pass occupies residues 144-164 (IGVASVIRGLLMLTPMVALLI). Residues 165–201 (RLSYCHSQVLHHSYCYHPDVMKLSCTDTRINSAVGLT) lie on the Extracellular side of the membrane. Residues 202–222 (AMFSTVGVDLLLILLSYVLII) form a helical membrane-spanning segment. Residues 223–240 (RTVLSVASPEERKETFST) are Cytoplasmic-facing. A helical membrane pass occupies residues 241–261 (CVSHIVAFAIYYIPLISLSIV). The Extracellular portion of the chain corresponds to 262-273 (HRFGKQAPAYVH). A helical transmembrane segment spans residues 274–294 (TMIANTYLLISPLMNPVIYSV). Residues 295-312 (KTKQIRRAVIKILHSKET) lie on the Cytoplasmic side of the membrane.

It belongs to the G-protein coupled receptor 1 family.

It is found in the membrane. Odorant receptor. The protein is Olfactory receptor OR51C1 of Homo sapiens (Human).